Here is a 226-residue protein sequence, read N- to C-terminus: Putative uroporphyrinogen-III synthase (226 aa).

Belongs to the uroporphyrinogen-III synthase family.

It carries out the reaction hydroxymethylbilane = uroporphyrinogen III + H2O. The protein operates within porphyrin-containing compound metabolism; protoporphyrin-IX biosynthesis; coproporphyrinogen-III from 5-aminolevulinate: step 3/4. In terms of biological role, catalyzes cyclization of the linear tetrapyrrole, hydroxymethylbilane, to the macrocyclic uroporphyrinogen III. The sequence is that of Putative uroporphyrinogen-III synthase from Archaeoglobus fulgidus (strain ATCC 49558 / DSM 4304 / JCM 9628 / NBRC 100126 / VC-16).